A 65-amino-acid polypeptide reads, in one-letter code: MITDPKMLELLVCPITGGTLSLNRKTQELISLEAKLAYPIRDGVPIMLASEARPLQNNGKELHKK.

Belongs to the UPF0434 family.

This chain is UPF0434 protein BH12860, found in Bartonella henselae (strain ATCC 49882 / DSM 28221 / CCUG 30454 / Houston 1) (Rochalimaea henselae).